Consider the following 120-residue polypeptide: NAD(P)H-quinone oxidoreductase subunit 3, chloroplastic (120 aa).

3 consecutive transmembrane segments (helical) span residues 7 to 27 (YDSF…AFSI), 63 to 83 (YMFA…YPWA), and 89 to 109 (LGLF…VGLV).

The protein belongs to the complex I subunit 3 family. In terms of assembly, NDH is composed of at least 16 different subunits, 5 of which are encoded in the nucleus.

The protein resides in the plastid. The protein localises to the chloroplast thylakoid membrane. It catalyses the reaction a plastoquinone + NADH + (n+1) H(+)(in) = a plastoquinol + NAD(+) + n H(+)(out). The catalysed reaction is a plastoquinone + NADPH + (n+1) H(+)(in) = a plastoquinol + NADP(+) + n H(+)(out). NDH shuttles electrons from NAD(P)H:plastoquinone, via FMN and iron-sulfur (Fe-S) centers, to quinones in the photosynthetic chain and possibly in a chloroplast respiratory chain. The immediate electron acceptor for the enzyme in this species is believed to be plastoquinone. Couples the redox reaction to proton translocation, and thus conserves the redox energy in a proton gradient. The protein is NAD(P)H-quinone oxidoreductase subunit 3, chloroplastic of Adiantum capillus-veneris (Maidenhair fern).